Consider the following 141-residue polypeptide: Large ribosomal subunit protein uL11 (141 aa).

This sequence belongs to the universal ribosomal protein uL11 family. Part of the ribosomal stalk of the 50S ribosomal subunit. Interacts with L10 and the large rRNA to form the base of the stalk. L10 forms an elongated spine to which L12 dimers bind in a sequential fashion forming a multimeric L10(L12)X complex. Post-translationally, one or more lysine residues are methylated.

Its function is as follows. Forms part of the ribosomal stalk which helps the ribosome interact with GTP-bound translation factors. The protein is Large ribosomal subunit protein uL11 of Geobacillus thermodenitrificans (strain NG80-2).